Consider the following 1114-residue polypeptide: Proto-oncogene tyrosine-protein kinase receptor Ret (1114 aa).

Positions 1-28 (MAKATSGAAGLRLLLLLLLPLLGKVALG) are cleaved as a signal peptide. The interval 29 to 153 (LYFSRDAYWE…RVYFSFFNTS (125 aa)) is cadherin-like region 1 (CLD1). Topologically, residues 29–635 (LYFSRDAYWE…QDPLCDELCR (607 aa)) are extracellular. Asn98 is a glycosylation site (N-linked (GlcNAc...) asparagine). A disulfide bridge links Cys137 with Cys142. A glycan (N-linked (GlcNAc...) asparagine) is linked at Asn151. Intrachain disulfides connect Cys157/Cys197 and Cys166/Cys243. A Cadherin domain is found at 168-272 (PETRPSFRIR…YDEDDSAPTF (105 aa)). Ca(2+) contacts are provided by Glu178 and Asn179. A glycan (N-linked (GlcNAc...) asparagine) is linked at Asn199. Asp230, Glu232, Asp264, Glu265, Asp266, Asp267, Ser268, Asp300, and Asp302 together coordinate Ca(2+). Residues 265–379 (EDDSAPTFPA…MQLAVLVNDS (115 aa)) form a cadherin-like region 3 (CLD3) region. N-linked (GlcNAc...) asparagine glycosylation is found at Asn336, Asn343, Asn361, Asn367, and Asn377. Position 378 (Asp378) interacts with Ca(2+). Asn394 carries an N-linked (GlcNAc...) asparagine glycan. Residues 405-506 (PSTYSLSVSR…QAQLLVTVEG (102 aa)) are cadherin-like region 4 (CLD4). Residues Cys426 and Cys430 are joined by a disulfide bond. Asn448 and Asn468 each carry an N-linked (GlcNAc...) asparagine glycan. Intrachain disulfides connect Cys449–Cys478, Cys515–Cys531, Cys519–Cys541, and Cys528–Cys558. An N-linked (GlcNAc...) asparagine glycan is attached at Asn554. Ca(2+)-binding residues include Thr564, Cys565, Asp567, His569, Glu574, and Asp584. Cystine bridges form between Cys565-Cys581, Cys570-Cys585, Cys609-Cys620, Cys611-Cys618, and Cys630-Cys634. Residues 636 to 657 (TVIAAAVLFSFIVSVLLSAFCI) form a helical membrane-spanning segment. Topologically, residues 658-1114 (HCYHKFAHKP…AAKLMDTFDS (457 aa)) are cytoplasmic. Tyr687 carries the post-translational modification Phosphotyrosine; by autocatalysis. An O-linked (GlcNAc) serine glycan is attached at Ser688. Ser696 carries the post-translational modification Phosphoserine. In terms of domain architecture, Protein kinase spans 724–1016 (LVLGKTLGEG…KMMVKRRDYL (293 aa)). ATP-binding positions include 730-738 (LGEGEFGKV) and Lys758. 805-807 (EYA) serves as a coordination point for semaxanib. Tyr806, Tyr809, and Tyr826 each carry phosphotyrosine; by autocatalysis. Catalysis depends on Asp874, which acts as the Proton acceptor. Tyr900, Tyr905, Tyr981, Tyr1015, Tyr1029, Tyr1062, Tyr1090, and Tyr1096 each carry phosphotyrosine; by autocatalysis.

It belongs to the protein kinase superfamily. Tyr protein kinase family. As to quaternary structure, phosphorylated form interacts with the PBT domain of DOK2, DOK4 and DOK5. The phosphorylated form interacts with PLCG1 and GRB7. Interacts (not phosphorylated) with PTK2/FAK1 (via FERM domain). Extracellular cell-membrane anchored RET cadherin fragments form complex in neurons with reduced trophic status, preferentially at the contact sites between somas. Interacts with AIP in the pituitary gland; this interaction prevents the formation of the AIP-survivin complex. Interacts (inactive) with CBLC and CD2AP; dissociates upon activation by GDNF which increases CBLC:CD2AP interaction. The cofactor is Ca(2+). Post-translationally, autophosphorylated on C-terminal tyrosine residues upon ligand stimulation. Proteolytically cleaved by caspase-3. The soluble RET kinase fragment is able to induce cell death. The extracellular cell-membrane anchored RET cadherin fragment accelerates cell adhesion in sympathetic neurons.

The protein localises to the cell membrane. The protein resides in the endosome membrane. It carries out the reaction L-tyrosyl-[protein] + ATP = O-phospho-L-tyrosyl-[protein] + ADP + H(+). Repressed by 4-(3-hydroxyanilino)-quinolines derivatives, indolin-2-one-derivatives, 2-(alkylsulfanyl)-4-(3-thienyl) nicotinonitrile analogs, 3- and 4-substituted beta-carbolin-1-ones, vandetanib, motesanib, sorafenib (BAY 43-9006), cabozantinib (XL184), lenvatinib, sunitinib, nintedanib, and withaferin A (WA). Inactivation by sorafenib both reduces kinase activity and promotes lysosomal degradation. Its function is as follows. Receptor tyrosine-protein kinase involved in numerous cellular mechanisms including cell proliferation, neuronal navigation, cell migration, and cell differentiation in response to glia cell line-derived growth family factors (GDNF, NRTN, ARTN, PSPN and GDF15). In contrast to most receptor tyrosine kinases, RET requires not only its cognate ligands but also coreceptors, for activation. GDNF ligands (GDNF, NRTN, ARTN, PSPN and GDF15) first bind their corresponding GDNFR coreceptors (GFRA1, GFRA2, GFRA3, GFRA4 and GFRAL, respectively), triggering RET autophosphorylation and activation, leading to activation of downstream signaling pathways, including the MAPK- and AKT-signaling pathways. Acts as a dependence receptor via the GDNF-GFRA1 signaling: in the presence of the ligand GDNF in somatotrophs within pituitary, promotes survival and down regulates growth hormone (GH) production, but triggers apoptosis in absence of GDNF. Required for the molecular mechanisms orchestration during intestine organogenesis via the ARTN-GFRA3 signaling: involved in the development of enteric nervous system and renal organogenesis during embryonic life, and promotes the formation of Peyer's patch-like structures, a major component of the gut-associated lymphoid tissue. Mediates, through interaction with GDF15-receptor GFRAL, GDF15-induced cell-signaling in the brainstem which triggers an aversive response, characterized by nausea, vomiting, and/or loss of appetite in response to various stresses. Modulates cell adhesion via its cleavage by caspase in sympathetic neurons and mediates cell migration in an integrin (e.g. ITGB1 and ITGB3)-dependent manner. Also active in the absence of ligand, triggering apoptosis through a mechanism that requires receptor intracellular caspase cleavage. Triggers the differentiation of rapidly adapting (RA) mechanoreceptors. Involved in the development of the neural crest. Regulates nociceptor survival and size. Phosphorylates PTK2/FAK1. Isoform 1 in complex with GFRAL induces higher activation of MAPK-signaling pathway than isoform 2 in complex with GFRAL. This is Proto-oncogene tyrosine-protein kinase receptor Ret from Homo sapiens (Human).